The sequence spans 23 residues: Benzaldehyde dehydrogenase [NAD(+)] I (23 aa).

Belongs to the aldehyde dehydrogenase family. Homotetramer.

The enzyme catalyses benzaldehyde + NAD(+) + H2O = benzoate + NADH + 2 H(+). The polypeptide is Benzaldehyde dehydrogenase [NAD(+)] I (Acinetobacter guillouiae (Acinetobacter genomosp. 11)).